A 555-amino-acid chain; its full sequence is Formate--tetrahydrofolate ligase (555 aa).

65–72 contacts ATP; it reads TPAGEGKS.

Belongs to the formate--tetrahydrofolate ligase family.

It catalyses the reaction (6S)-5,6,7,8-tetrahydrofolate + formate + ATP = (6R)-10-formyltetrahydrofolate + ADP + phosphate. The protein operates within one-carbon metabolism; tetrahydrofolate interconversion. The polypeptide is Formate--tetrahydrofolate ligase (Staphylococcus aureus (strain USA300)).